The following is a 646-amino-acid chain: Epithelial sodium channel subunit beta-2 (646 aa).

Residues 1–57 (MIQGKLKRLKRYFTRALHRIQKGPGYTYKELLVWFCDNTNTHGPKRIIKEGPKKRVM) lie on the Cytoplasmic side of the membrane. Residues 58–78 (WFILTLVFAGLVFWQWGLLIL) form a helical membrane-spanning segment. The Extracellular segment spans residues 79–551 (TYLSYGVSVS…GGQFGFWMGG (473 aa)). 8 cysteine pairs are disulfide-bonded: Cys-104-Cys-290, Cys-214-Cys-221, Cys-267-Cys-274, Cys-380-Cys-467, Cys-405-Cys-463, Cys-409-Cys-459, Cys-418-Cys-445, and Cys-420-Cys-434. Residues 552-572 (SVLCIIEFGEIIIDCMWITIL) traverse the membrane as a helical segment. Residues 573–646 (KLLAWIRNRR…IEPVSSDEEN (74 aa)) lie on the Cytoplasmic side of the membrane. The segment at 586–646 (QRPQYADPPP…IEPVSSDEEN (61 aa)) is disordered. Basic and acidic residues predominate over residues 610-619 (QHDDGNHVTE).

This sequence belongs to the amiloride-sensitive sodium channel (TC 1.A.6) family. SCNN1B subfamily. As to quaternary structure, component of the heterotrimeric epithelial sodium channel (ENaC) composed of an alpha/SCNN1A, a beta/SCNN1B and a gamma/SCNN1G subunit.

The protein resides in the apical cell membrane. It is found in the cytoplasmic vesicle membrane. It carries out the reaction Na(+)(in) = Na(+)(out). Originally identified and characterized by its inhibition by the diuretic drug amiloride. This is one of the three pore-forming subunits of the heterotrimeric epithelial sodium channel (ENaC), a critical regulator of sodium balance and fluid homeostasis. ENaC operates in epithelial tissues, where it mediates the electrodiffusion of sodium ions from extracellular fluid through the apical membrane of cells, with water following osmotically. The polypeptide is Epithelial sodium channel subunit beta-2 (scnn1b-b) (Xenopus laevis (African clawed frog)).